Here is a 134-residue protein sequence, read N- to C-terminus: Profilin-2 (134 aa).

The cysteines at positions 13 and 118 are disulfide-linked. The Involved in PIP2 interaction signature appears at 84–100 (AVIRGKKGSGGITIKKT). The residue at position 114 (T114) is a Phosphothreonine.

Belongs to the profilin family. In terms of assembly, occurs in many kinds of cells as a complex with monomeric actin in a 1:1 ratio. In terms of processing, phosphorylated by MAP kinases.

It localises to the cytoplasm. The protein resides in the cytoskeleton. In terms of biological role, binds to actin and affects the structure of the cytoskeleton. At high concentrations, profilin prevents the polymerization of actin, whereas it enhances it at low concentrations. The protein is Profilin-2 of Olea europaea (Common olive).